A 1454-amino-acid polypeptide reads, in one-letter code: Probable cleavage and polyadenylation specificity factor subunit 1 (1454 aa).

Residues 810 to 843 are disordered; sequence EEKEKKAKQTAAQEKEKETEKKKDDAKNEEDQVN. The segment covering 812–843 has biased composition (basic and acidic residues); that stretch reads KEKKAKQTAAQEKEKETEKKKDDAKNEEDQVN.

The protein belongs to the CPSF1 family. As to quaternary structure, CPSF is a heterotetramer composed of four distinct subunits 160 (cpsf-1), 100 (cpsf-2), 70 (cpsf-3), and 30 kDa (cpsf-4).

Its subcellular location is the nucleus. Its function is as follows. CPSF plays a key role in pre-mRNA 3'-end formation, recognizing the AAUAAA signal sequence and interacting with poly(A)polymerase and other factors to bring about cleavage and poly(A) addition. This subunit is involved in the RNA recognition step of the polyadenylation reaction. The polypeptide is Probable cleavage and polyadenylation specificity factor subunit 1 (Caenorhabditis briggsae).